Consider the following 143-residue polypeptide: Nucleoside diphosphate kinase (143 aa).

ATP-binding residues include Lys-11, Phe-59, Arg-87, Thr-93, Arg-104, and Asn-114. His-117 functions as the Pros-phosphohistidine intermediate in the catalytic mechanism.

This sequence belongs to the NDK family. As to quaternary structure, homotetramer. Mg(2+) is required as a cofactor.

The protein resides in the cytoplasm. The catalysed reaction is a 2'-deoxyribonucleoside 5'-diphosphate + ATP = a 2'-deoxyribonucleoside 5'-triphosphate + ADP. It carries out the reaction a ribonucleoside 5'-diphosphate + ATP = a ribonucleoside 5'-triphosphate + ADP. Functionally, major role in the synthesis of nucleoside triphosphates other than ATP. The ATP gamma phosphate is transferred to the NDP beta phosphate via a ping-pong mechanism, using a phosphorylated active-site intermediate. The polypeptide is Nucleoside diphosphate kinase (Idiomarina loihiensis (strain ATCC BAA-735 / DSM 15497 / L2-TR)).